The primary structure comprises 274 residues: Serine/threonine-protein kinase 1 (274 aa).

The 249-residue stretch at A17–W265 folds into the Protein kinase domain. ATP contacts are provided by residues L23–V31 and K46. D133 acts as the Proton acceptor in catalysis.

This sequence belongs to the protein kinase superfamily. Ser/Thr protein kinase family.

The catalysed reaction is L-seryl-[protein] + ATP = O-phospho-L-seryl-[protein] + ADP + H(+). It catalyses the reaction L-threonyl-[protein] + ATP = O-phospho-L-threonyl-[protein] + ADP + H(+). In vitro, can phosphorylate histone H1. This chain is Serine/threonine-protein kinase 1 (PK1), found in Lymantria dispar multicapsid nuclear polyhedrosis virus (LdMNPV).